Here is a 253-residue protein sequence, read N- to C-terminus: Ipsdienol dehydrogenase (253 aa).

NAD(+)-binding positions include 12–40 (VTGGGSGLGEATAKLLLTEGARVTIFSRN) and D63. S149 is a binding site for substrate. Y162 acts as the Proton acceptor in catalysis. K166 is an NAD(+) binding site.

This sequence belongs to the short-chain dehydrogenases/reductases (SDR) family. Specifically expressed in male midguts. Expressed at higher level in the anterior midgut of fed males.

It is found in the cytoplasm. The protein resides in the cytosol. It catalyses the reaction (4R)-ipsdienol + NADP(+) = ipsdienone + NADPH + H(+). The enzyme catalyses (4R)-ipsdienol + NAD(+) = ipsdienone + NADH + H(+). Its function is as follows. Catalyzes the oxidation of racemic ipsdienol and (4R)-(-)-ipsdienol to form ipsdienone (2-methyl-6-methylene-2,7-octadien-4-one), an intermediate in the biosynthesis of pheromonal ipsdienol in male pine engraver beetles. In contrast, (4S)-(+)-ipsdienol is not a substrate. This chain is Ipsdienol dehydrogenase, found in Ips pini (Pine engraver beetle).